The sequence spans 242 residues: Tyrosine recombinase XerD-like (242 aa).

In terms of domain architecture, Core-binding (CB) spans Met1 to Tyr71. The Tyr recombinase domain occupies Glu90–Arg242. Residues Lys148 and Arg209 contribute to the active site. Tyr241 acts as the O-(3'-phospho-DNA)-tyrosine intermediate in catalysis.

This sequence belongs to the 'phage' integrase family. XerD-like subfamily.

It is found in the cytoplasm. In terms of biological role, putative tyrosine recombinase. Not involved in the cutting and rejoining of the recombining DNA molecules on dif(SL) site. This is Tyrosine recombinase XerD-like from Streptococcus gordonii (strain Challis / ATCC 35105 / BCRC 15272 / CH1 / DL1 / V288).